A 2062-amino-acid polypeptide reads, in one-letter code: Ankyrin repeat domain-containing protein 12 (2062 aa).

2 disordered regions span residues Met-1–Lys-119 and Ala-145–Pro-188. Positions Pro-9–Asn-20 are enriched in polar residues. 2 stretches are compositionally biased toward basic and acidic residues: residues Pro-41–Ser-57 and Tyr-100–Asn-117. The span at Ala-145–Ser-172 shows a compositional bias: polar residues. Ser-149 carries the phosphoserine modification. A compositionally biased stretch (basic and acidic residues) spans Arg-173–Thr-187. ANK repeat units follow at residues Arg-184–Val-213, Ala-217–Thr-246, and Asp-250–Ala-280. Disordered stretches follow at residues Lys-301–Asp-338, Lys-409–Thr-501, Ile-538–Gln-577, Gln-609–Lys-683, Glu-727–Leu-788, Glu-812–Asp-1073, Lys-1097–Val-1227, and Glu-1328–Val-1350. Residues Leu-306 to Glu-318 are compositionally biased toward acidic residues. Composition is skewed to polar residues over residues Ala-319–Asp-328 and Lys-437–Met-454. Over residues Gln-455–Lys-467 the composition is skewed to basic and acidic residues. Residues Gln-468–Asn-480 are compositionally biased toward basic residues. The span at Lys-481–Thr-498 shows a compositional bias: basic and acidic residues. Ser-543 bears the Phosphoserine mark. A compositionally biased stretch (polar residues) spans Thr-565–Ser-575. Basic and acidic residues-rich tracts occupy residues Gln-609–Pro-631, Thr-639–Thr-649, Lys-658–Lys-683, Glu-727–Glu-784, Glu-812–Ser-969, His-977–Ile-1037, Lys-1061–Asn-1072, and Lys-1103–Lys-1157. Phosphoserine is present on Ser-630. The residue at position 861 (Ser-861) is a Phosphoserine. The span at Ser-1161–Ser-1189 shows a compositional bias: polar residues. Over residues Ser-1200 to Glu-1213 the composition is skewed to low complexity. Residues Glu-1328–Pro-1344 show a composition bias toward polar residues. Ser-1401 is modified (phosphoserine). 2 disordered regions span residues Asn-1721 to Ala-1744 and Leu-1756 to Pro-1795. Polar residues predominate over residues Asn-1729 to Ala-1744.

As to quaternary structure, interacts with the PAS region of the p160 coactivators.

Its subcellular location is the nucleus. Its function is as follows. May recruit HDACs to the p160 coactivators/nuclear receptor complex to inhibit ligand-dependent transactivation. The protein is Ankyrin repeat domain-containing protein 12 (ANKRD12) of Homo sapiens (Human).